We begin with the raw amino-acid sequence, 335 residues long: Protein FATTY ACID EXPORT 3, chloroplastic (335 aa).

Residues Met1 to Val72 constitute a chloroplast transit peptide. The interval Gly82–Thr101 is disordered. Residues Val88–Thr101 are compositionally biased toward basic and acidic residues. Positions Thr101 to Lys160 form a coiled coil. 3 helical membrane-spanning segments follow: residues Phe205–Val225, Ser228–Ala248, and Ser286–Tyr306. A disordered region spans residues Pro316–Gly335.

It belongs to the TMEM14 family.

The protein resides in the plastid. It localises to the chloroplast membrane. Its function is as follows. May be involved in free fatty acids export from the plastids. This is Protein FATTY ACID EXPORT 3, chloroplastic from Arabidopsis thaliana (Mouse-ear cress).